We begin with the raw amino-acid sequence, 389 residues long: Sulfate adenylyltransferase (389 aa).

The protein belongs to the sulfate adenylyltransferase family.

The enzyme catalyses sulfate + ATP + H(+) = adenosine 5'-phosphosulfate + diphosphate. The protein operates within sulfur metabolism; hydrogen sulfide biosynthesis; sulfite from sulfate: step 1/3. This is Sulfate adenylyltransferase from Hyperthermus butylicus (strain DSM 5456 / JCM 9403 / PLM1-5).